The primary structure comprises 352 residues: GTPase Obg (352 aa).

Residues 1–159 (MSFIDEAKVF…FPIFMQLKVL (159 aa)) enclose the Obg domain. Residues 160-327 (SDIGIIGMPN…VMLYEMLQKD (168 aa)) enclose the OBG-type G domain. Residues 166–173 (GMPNAGKS), 191–195 (FTTLE), 212–215 (DIPG), 279–282 (NKCD), and 308–310 (SLD) each bind GTP. Positions 173 and 193 each coordinate Mg(2+).

This sequence belongs to the TRAFAC class OBG-HflX-like GTPase superfamily. OBG GTPase family. Monomer. Mg(2+) serves as cofactor.

Its subcellular location is the cytoplasm. In terms of biological role, an essential GTPase which binds GTP, GDP and possibly (p)ppGpp with moderate affinity, with high nucleotide exchange rates and a fairly low GTP hydrolysis rate. Plays a role in control of the cell cycle, stress response, ribosome biogenesis and in those bacteria that undergo differentiation, in morphogenesis control. In Anaplasma phagocytophilum (strain HZ), this protein is GTPase Obg.